The following is a 297-amino-acid chain: GTPase Era (297 aa).

In terms of domain architecture, Era-type G spans 7–174; that stretch reads RSGFVSIIGR…VEVVHGFIPA (168 aa). The interval 15 to 22 is G1; the sequence is GRPNVGKS. 15 to 22 is a binding site for GTP; the sequence is GRPNVGKS. The G2 stretch occupies residues 41–45; that stretch reads QTTRN. The segment at 62 to 65 is G3; sequence DTPG. GTP-binding positions include 62–66 and 124–127; these read DTPGI and NKID. A G4 region spans residues 124 to 127; it reads NKID. Residues 153–155 form a G5 region; it reads VSA. A KH type-2 domain is found at 205-282; sequence THDEVPYSVA…FLELFVRVSK (78 aa).

The protein belongs to the TRAFAC class TrmE-Era-EngA-EngB-Septin-like GTPase superfamily. Era GTPase family. In terms of assembly, monomer.

It is found in the cytoplasm. Its subcellular location is the cell inner membrane. An essential GTPase that binds both GDP and GTP, with rapid nucleotide exchange. Plays a role in 16S rRNA processing and 30S ribosomal subunit biogenesis and possibly also in cell cycle regulation and energy metabolism. This Geotalea uraniireducens (strain Rf4) (Geobacter uraniireducens) protein is GTPase Era.